The chain runs to 209 residues: N-(5'-phosphoribosyl)anthranilate isomerase (209 aa).

The protein belongs to the TrpF family.

It catalyses the reaction N-(5-phospho-beta-D-ribosyl)anthranilate = 1-(2-carboxyphenylamino)-1-deoxy-D-ribulose 5-phosphate. Its pathway is amino-acid biosynthesis; L-tryptophan biosynthesis; L-tryptophan from chorismate: step 3/5. The chain is N-(5'-phosphoribosyl)anthranilate isomerase from Pelobacter propionicus (strain DSM 2379 / NBRC 103807 / OttBd1).